The sequence spans 31 residues: Cytochrome b6-f complex subunit 6 (31 aa).

The helical transmembrane segment at 4-24 (LLSYFGLLLAALISTLVLFIG) threads the bilayer.

It belongs to the PetL family. As to quaternary structure, the 4 large subunits of the cytochrome b6-f complex are cytochrome b6, subunit IV (17 kDa polypeptide, PetD), cytochrome f and the Rieske protein, while the 4 small subunits are PetG, PetL, PetM and PetN. The complex functions as a dimer.

It localises to the plastid. Its subcellular location is the chloroplast thylakoid membrane. Functionally, component of the cytochrome b6-f complex, which mediates electron transfer between photosystem II (PSII) and photosystem I (PSI), cyclic electron flow around PSI, and state transitions. PetL is important for photoautotrophic growth as well as for electron transfer efficiency and stability of the cytochrome b6-f complex. In Psilotum nudum (Whisk fern), this protein is Cytochrome b6-f complex subunit 6.